The chain runs to 87 residues: Kawaguchipeptin peptide (87 aa).

Residues 1–33 (MKNPTLLPKLTAPVERPAVTSSDLKQASSVDAA) constitute a propeptide that is removed on maturation. The 3'-prenyl-2',N2-cyclotryptophan; partial moiety is linked to residue W34. The segment at residues 34–44 (WLNGDNNWSTP) is a cross-link (cyclopeptide (Trp-Pro)). D-leucine; partial is present on L35. A lipid anchor (3'-prenyl-2',N2-cyclotryptophan; partial) is attached at W41. A propeptide spanning residues 45–51 (FAGVNAA) is cleaved from the precursor. A lipid anchor (3'-prenyl-2',N2-cyclotryptophan; partial) is attached at W52. A cross-link (cyclopeptide (Trp-Pro)) is located at residues 52–62 (WLNGDNNWSTP). L53 carries the post-translational modification D-leucine; partial. A lipid anchor (3'-prenyl-2',N2-cyclotryptophan; partial) is attached at W59. A propeptide spanning residues 63 to 69 (FAGVNAA) is cleaved from the precursor. W70 is lipidated: 3'-prenyl-2',N2-cyclotryptophan; partial. Residues 70–80 (WLNGDNNWSTP) constitute a cross-link (cyclopeptide (Trp-Pro)). L71 is subject to D-leucine; partial. A lipid anchor (3'-prenyl-2',N2-cyclotryptophan; partial) is attached at W77. Positions 81–87 (FAADGAE) are excised as a propeptide.

Post-translationally, kawaguchipeptin A contains a D-Leu and 2 prenylated Trp, whereas kawaguchipeptin B only contains unmodified amino acids. Kawaguchipeptin A is prenylated in vivo. Upon expression in E.coli of the whole operon, Trp residues are prenylated by C-prenyltransferase KgpF. Prenylation by KgpF is likely the last enzymatic step in the biosynthetic maturation of kawaguchipeptin A.

In terms of biological role, both kawaguchipeptin A and B, which only differ by post-translational modifications, have antibacterial activities, since they inhibit the growth of the Gram-positive bacterium S.aureus at a concentration of 1 ug/mL. This chain is Kawaguchipeptin peptide, found in Microcystis aeruginosa (strain NIES-88 / KW-MA1-3).